A 475-amino-acid polypeptide reads, in one-letter code: Crocetin glucosyltransferase 3 (475 aa).

The active-site Proton acceptor is histidine 16. Histidine 16 is an an anthocyanidin binding site. Aspartate 123 acts as the Charge relay in catalysis. Residues threonine 144, alanine 354, glutamine 356, histidine 371, tryptophan 374, asparagine 375, serine 376, and glutamate 379 each coordinate UDP-alpha-D-glucose. Alanine 394 serves as a coordination point for an anthocyanidin. UDP-alpha-D-glucose is bound by residues glutamate 395 and glutamine 396.

Belongs to the UDP-glycosyltransferase family. Mainly expressed in stamens.

The enzyme catalyses crocetin + UDP-alpha-D-glucose = beta-D-glucosyl crocetin + UDP. It carries out the reaction beta-D-glucosyl crocetin + UDP-alpha-D-glucose = bis(beta-D-glucosyl) crocetin + UDP. It catalyses the reaction beta-D-gentiobiosyl crocetin + UDP-alpha-D-glucose = beta-D-gentiobiosyl beta-D-glucosyl crocetin + UDP. Functionally, crocetin glucosyltransferase involved in the synthesis of crocin, one of the apocarotenoids responsible for the color and bitter taste of saffron. In Crocus sativus (Saffron), this protein is Crocetin glucosyltransferase 3 (GLT3).